The primary structure comprises 493 residues: Glutamyl-tRNA(Gln) amidotransferase subunit A (493 aa).

Catalysis depends on charge relay system residues Lys-79 and Ser-159. Ser-183 acts as the Acyl-ester intermediate in catalysis.

This sequence belongs to the amidase family. GatA subfamily. Heterotrimer of A, B and C subunits.

The enzyme catalyses L-glutamyl-tRNA(Gln) + L-glutamine + ATP + H2O = L-glutaminyl-tRNA(Gln) + L-glutamate + ADP + phosphate + H(+). Allows the formation of correctly charged Gln-tRNA(Gln) through the transamidation of misacylated Glu-tRNA(Gln) in organisms which lack glutaminyl-tRNA synthetase. The reaction takes place in the presence of glutamine and ATP through an activated gamma-phospho-Glu-tRNA(Gln). The chain is Glutamyl-tRNA(Gln) amidotransferase subunit A from Chelativorans sp. (strain BNC1).